The sequence spans 141 residues: Hemoglobin subunit alpha-D (141 aa).

The Globin domain maps to 1–141; the sequence is MLTADDKKLL…VAAVLAEKYR (141 aa). Heme b-binding residues include His58 and His87.

It belongs to the globin family. Heterotetramer of two alpha-D chains and two beta chains. In terms of tissue distribution, red blood cells.

Its function is as follows. Involved in oxygen transport from the lung to the various peripheral tissues. The chain is Hemoglobin subunit alpha-D (HBAD) from Anser anser anser (Western greylag goose).